Reading from the N-terminus, the 483-residue chain is Glucose-1-phosphate adenylyltransferase large subunit 3, chloroplastic/amyloplastic (483 aa).

It belongs to the bacterial/plant glucose-1-phosphate adenylyltransferase family. Heterotetramer. Tubers.

Its subcellular location is the plastid. It localises to the chloroplast. The protein localises to the amyloplast. It carries out the reaction alpha-D-glucose 1-phosphate + ATP + H(+) = ADP-alpha-D-glucose + diphosphate. The protein operates within glycan biosynthesis; starch biosynthesis. Its activity is regulated as follows. Activated by 3'phosphoglycerate, inhibited by orthophosphate. Allosteric regulation. Its function is as follows. This protein plays a role in synthesis of starch. It catalyzes the synthesis of the activated glycosyl donor, ADP-glucose from Glc-1-P and ATP. In Solanum tuberosum (Potato), this protein is Glucose-1-phosphate adenylyltransferase large subunit 3, chloroplastic/amyloplastic (AGPS3).